A 147-amino-acid polypeptide reads, in one-letter code: Hemoglobin subunit beta (147 aa).

Position 2 is an N-acetylvaline (Val2). The Globin domain maps to 3 to 147 (HLSGDEKNAV…VANALAHRYH (145 aa)). Residue Ser45 is modified to Phosphoserine. At Lys60 the chain carries N6-acetyllysine. A heme b-binding site is contributed by His64. The residue at position 83 (Lys83) is an N6-acetyllysine. His93 is a binding site for heme b. S-nitrosocysteine is present on Cys94.

It belongs to the globin family. In terms of assembly, heterotetramer of two alpha chains and two beta chains. Red blood cells.

Functionally, involved in oxygen transport from the lung to the various peripheral tissues. The polypeptide is Hemoglobin subunit beta (HBB) (Camelus dromedarius (Dromedary)).